The sequence spans 406 residues: Serine hydroxymethyltransferase (406 aa).

(6S)-5,6,7,8-tetrahydrofolate is bound by residues Leu111 and 115–117; that span reads GHL. Lys220 carries the post-translational modification N6-(pyridoxal phosphate)lysine. Residue 340 to 342 participates in (6S)-5,6,7,8-tetrahydrofolate binding; it reads SAF.

It belongs to the SHMT family. As to quaternary structure, homodimer. Requires pyridoxal 5'-phosphate as cofactor.

Its subcellular location is the cytoplasm. The enzyme catalyses (6R)-5,10-methylene-5,6,7,8-tetrahydrofolate + glycine + H2O = (6S)-5,6,7,8-tetrahydrofolate + L-serine. It functions in the pathway one-carbon metabolism; tetrahydrofolate interconversion. Its pathway is amino-acid biosynthesis; glycine biosynthesis; glycine from L-serine: step 1/1. Functionally, catalyzes the reversible interconversion of serine and glycine with tetrahydrofolate (THF) serving as the one-carbon carrier. This reaction serves as the major source of one-carbon groups required for the biosynthesis of purines, thymidylate, methionine, and other important biomolecules. Also exhibits THF-independent aldolase activity toward beta-hydroxyamino acids, producing glycine and aldehydes, via a retro-aldol mechanism. This is Serine hydroxymethyltransferase from Mycoplasma genitalium (strain ATCC 33530 / DSM 19775 / NCTC 10195 / G37) (Mycoplasmoides genitalium).